We begin with the raw amino-acid sequence, 228 residues long: uncharacterized protein (228 aa).

The Response regulatory domain occupies 5–119; it reads HILIVEDEEK…ELLARIRAAL (115 aa). Aspartate 54 bears the 4-aspartylphosphate mark. A DNA-binding region (ompR/PhoB-type) is located at residues 130-228; the sequence is GTFLTYDDLR…IRGVGYAIKG (99 aa).

In terms of processing, phosphorylated by YkoH.

The protein localises to the cytoplasm. Its function is as follows. Probable member of the two-component regulatory system YkoH/YkoG. This is an uncharacterized protein from Bacillus subtilis (strain 168).